Consider the following 61-residue polypeptide: Potassium channel toxin alpha-KTx 6.7 (61 aa).

The N-terminal stretch at 1-23 is a signal peptide; the sequence is MNAKFILLLLVVTTTMLLPDTQG. Disulfide bonds link Cys-29–Cys-50, Cys-35–Cys-55, Cys-39–Cys-57, and Cys-45–Cys-60. A Cysteine amide modification is found at Cys-60.

Belongs to the short scorpion toxin superfamily. Potassium channel inhibitor family. Alpha-KTx 06 subfamily. In terms of tissue distribution, expressed by the venom gland.

The protein localises to the secreted. Functionally, blocker of voltage-gated potassium channels. This is Potassium channel toxin alpha-KTx 6.7 from Opistophthalmus carinatus (African yellow leg scorpion).